We begin with the raw amino-acid sequence, 430 residues long: MDRIRIVGGNQLHGVIPISGAKNAALPLMIASLLTDDTLTLENVPHLADVEQLIRILGNHGADISVNGRRERQGESYARTIHFTSRNIVSTTAPYELVSKMRASFWVIGPLLAREGKARVSLPGGCAIGTRPVDLFIEGLTALGANIEIDGGYVNATAPEGGLTGGRYVFPKVSVGATHVLMMAATLANGTTVIGNAAREPEVADLAKCLNAMGAKITGAGTGTITIEGVRSLSGARHRVLPDRIETGTYAMAVAMTGGDVILEDTEASLLDTALEAIRRAGAEISETNSGIRVVRNGAGIRPVDIVTDPFPGFPTDLQAQFMGLMTKSSGVSHITETIFENRFMHVQELARLGAKISLSGQTAKIEGVGRLKGAPVMATDLRASVSLVIAGLAAEGETMVSRVYHLDRGFERLEEKLTRCGAHVERVSD.

22–23 (KN) is a phosphoenolpyruvate binding site. UDP-N-acetyl-alpha-D-glucosamine is bound at residue Arg102. Cys126 (proton donor) is an active-site residue. Cys126 is subject to 2-(S-cysteinyl)pyruvic acid O-phosphothioketal. UDP-N-acetyl-alpha-D-glucosamine is bound by residues 131-135 (RPVDL), 172-175 (KVSV), Asp317, and Ile339.

The protein belongs to the EPSP synthase family. MurA subfamily.

Its subcellular location is the cytoplasm. The enzyme catalyses phosphoenolpyruvate + UDP-N-acetyl-alpha-D-glucosamine = UDP-N-acetyl-3-O-(1-carboxyvinyl)-alpha-D-glucosamine + phosphate. It functions in the pathway cell wall biogenesis; peptidoglycan biosynthesis. Cell wall formation. Adds enolpyruvyl to UDP-N-acetylglucosamine. The chain is UDP-N-acetylglucosamine 1-carboxyvinyltransferase from Sinorhizobium fredii (strain NBRC 101917 / NGR234).